A 471-amino-acid chain; its full sequence is Phosphatidylinositol 4-kinase type 2-alpha (471 aa).

Disordered regions lie at residues 1 to 25 (MDET…QCSP) and 48 to 101 (PGSA…PDDP). Residues 90–101 (AERERNKFPDDP) are compositionally biased toward basic and acidic residues. In terms of domain architecture, PI3K/PI4K catalytic spans 117–445 (DILPERISQG…VQTPPVIVET (329 aa)). The G-loop stretch occupies residues 123–129 (ISQGSSG). Residues 124–130 (SQGSSGS) and Lys-145 each bind ATP. An important for substrate binding region spans residues 150 to 152 (EPY). An important for interaction with membranes region spans residues 158–171 (KWTKWLQKLCCPCC). S-palmitoyl cysteine attachment occurs at residues Cys-167, Cys-168, Cys-170, and Cys-171. 254 to 257 (QLFV) contributes to the ATP binding site. The tract at residues 261-269 (KDADYWLRR) is important for interaction with membranes. Residues 298 to 306 (RNTDRGNDN) form a catalytic loop region. The activation loop stretch occupies residues 336–356 (AIDNGLAFPLKHPDSWRAYPF). Asp-338 is an ATP binding site. The interval 351 to 360 (WRAYPFYWAW) is important for interaction with membranes.

The protein belongs to the PI3/PI4-kinase family. Type II PI4K subfamily.

It localises to the golgi apparatus. The protein localises to the trans-Golgi network membrane. The protein resides in the membrane raft. Its subcellular location is the endosome. It is found in the endosome membrane. It localises to the cytoplasmic vesicle. The protein localises to the cell projection. The protein resides in the dendrite. Its subcellular location is the presynaptic cell membrane. It is found in the synapse. It localises to the synaptosome. The protein localises to the mitochondrion. The protein resides in the membrane. Its subcellular location is the cell membrane. It is found in the perikaryon. It localises to the neuron projection. It carries out the reaction a 1,2-diacyl-sn-glycero-3-phospho-(1D-myo-inositol) + ATP = a 1,2-diacyl-sn-glycero-3-phospho-(1D-myo-inositol 4-phosphate) + ADP + H(+). Its function is as follows. Membrane-bound phosphatidylinositol-4 kinase (PI4-kinase) that catalyzes the phosphorylation of phosphatidylinositol (PI) to phosphatidylinositol 4-phosphate (PI4P), a lipid that plays important roles in endocytosis, Golgi function, protein sorting and membrane trafficking. Besides, phosphorylation of phosphatidylinositol (PI) to phosphatidylinositol 4-phosphate (PI4P) is the first committed step in the generation of phosphatidylinositol 4,5-bisphosphate (PIP2), a precursor of the second messenger inositol 1,4,5-trisphosphate (InsP3). The polypeptide is Phosphatidylinositol 4-kinase type 2-alpha (pi4k2a) (Xenopus tropicalis (Western clawed frog)).